The chain runs to 211 residues: Thiamine-phosphate synthase (211 aa).

Residues 37–41 and Asn-69 contribute to the 4-amino-2-methyl-5-(diphosphooxymethyl)pyrimidine site; that span reads QLRIK. Mg(2+)-binding residues include Asp-70 and Asp-89. Ser-108 is a 4-amino-2-methyl-5-(diphosphooxymethyl)pyrimidine binding site. 134-136 provides a ligand contact to 2-[(2R,5Z)-2-carboxy-4-methylthiazol-5(2H)-ylidene]ethyl phosphate; the sequence is TQT. Residue Lys-137 coordinates 4-amino-2-methyl-5-(diphosphooxymethyl)pyrimidine. 2-[(2R,5Z)-2-carboxy-4-methylthiazol-5(2H)-ylidene]ethyl phosphate is bound by residues Gly-166 and 186–187; that span reads IS.

The protein belongs to the thiamine-phosphate synthase family. Requires Mg(2+) as cofactor.

The enzyme catalyses 2-[(2R,5Z)-2-carboxy-4-methylthiazol-5(2H)-ylidene]ethyl phosphate + 4-amino-2-methyl-5-(diphosphooxymethyl)pyrimidine + 2 H(+) = thiamine phosphate + CO2 + diphosphate. The catalysed reaction is 2-(2-carboxy-4-methylthiazol-5-yl)ethyl phosphate + 4-amino-2-methyl-5-(diphosphooxymethyl)pyrimidine + 2 H(+) = thiamine phosphate + CO2 + diphosphate. It catalyses the reaction 4-methyl-5-(2-phosphooxyethyl)-thiazole + 4-amino-2-methyl-5-(diphosphooxymethyl)pyrimidine + H(+) = thiamine phosphate + diphosphate. Its pathway is cofactor biosynthesis; thiamine diphosphate biosynthesis; thiamine phosphate from 4-amino-2-methyl-5-diphosphomethylpyrimidine and 4-methyl-5-(2-phosphoethyl)-thiazole: step 1/1. Condenses 4-methyl-5-(beta-hydroxyethyl)thiazole monophosphate (THZ-P) and 2-methyl-4-amino-5-hydroxymethyl pyrimidine pyrophosphate (HMP-PP) to form thiamine monophosphate (TMP). The sequence is that of Thiamine-phosphate synthase from Shigella boydii serotype 4 (strain Sb227).